We begin with the raw amino-acid sequence, 288 residues long: 4-diphosphocytidyl-2-C-methyl-D-erythritol kinase (288 aa).

Lys10 is an active-site residue. An ATP-binding site is contributed by 94–104; it reads PVAAGLGGGSS. The active site involves Asp136.

It belongs to the GHMP kinase family. IspE subfamily.

The enzyme catalyses 4-CDP-2-C-methyl-D-erythritol + ATP = 4-CDP-2-C-methyl-D-erythritol 2-phosphate + ADP + H(+). Its pathway is isoprenoid biosynthesis; isopentenyl diphosphate biosynthesis via DXP pathway; isopentenyl diphosphate from 1-deoxy-D-xylulose 5-phosphate: step 3/6. Functionally, catalyzes the phosphorylation of the position 2 hydroxy group of 4-diphosphocytidyl-2C-methyl-D-erythritol. This chain is 4-diphosphocytidyl-2-C-methyl-D-erythritol kinase, found in Lactiplantibacillus plantarum (strain ATCC BAA-793 / NCIMB 8826 / WCFS1) (Lactobacillus plantarum).